Consider the following 296-residue polypeptide: Indole-3-glycerol phosphate synthase (296 aa).

Belongs to the TrpC family.

It carries out the reaction 1-(2-carboxyphenylamino)-1-deoxy-D-ribulose 5-phosphate + H(+) = (1S,2R)-1-C-(indol-3-yl)glycerol 3-phosphate + CO2 + H2O. It functions in the pathway amino-acid biosynthesis; L-tryptophan biosynthesis; L-tryptophan from chorismate: step 4/5. This Microcystis aeruginosa (strain NIES-843 / IAM M-2473) protein is Indole-3-glycerol phosphate synthase.